The sequence spans 134 residues: Large ribosomal subunit protein eL32 (134 aa).

The protein belongs to the eukaryotic ribosomal protein eL32 family.

The sequence is that of Large ribosomal subunit protein eL32 (RpL32) from Apis mellifera (Honeybee).